Consider the following 298-residue polypeptide: Small ribosomal subunit protein uS2 (298 aa).

Positions 240 to 298 are disordered; that stretch reads AGENWDTQAPGAGVPGSAFAAASAAAATSWEADGGDWAASSAPPAGESWAETQPTEAKW. Residues 248–271 are compositionally biased toward low complexity; sequence APGAGVPGSAFAAASAAAATSWEA. A compositionally biased stretch (polar residues) spans 289 to 298; sequence AETQPTEAKW.

It belongs to the universal ribosomal protein uS2 family. As to quaternary structure, component of the small ribosomal subunit. Mature ribosomes consist of a small (40S) and a large (60S) subunit. The 40S subunit contains about 33 different proteins and 1 molecule of RNA (18S). The 60S subunit contains about 49 different proteins and 3 molecules of RNA (25S, 5.8S and 5S). Interacts with rps21.

It localises to the cytoplasm. Its function is as follows. Required for the assembly and/or stability of the 40S ribosomal subunit. Required for the processing of the 20S rRNA-precursor to mature 18S rRNA in a late step of the maturation of 40S ribosomal subunits. The sequence is that of Small ribosomal subunit protein uS2 (rps0) from Aspergillus clavatus (strain ATCC 1007 / CBS 513.65 / DSM 816 / NCTC 3887 / NRRL 1 / QM 1276 / 107).